The following is a 152-amino-acid chain: Acidic phospholipase A2 homolog taipoxin gamma chain (152 aa).

An N-terminal signal peptide occupies residues 1–19 (MHPAHLLVLLAVCVSLLGS). Intrachain disulfides connect Cys38–Cys104, Cys42–Cys46, Cys54–Cys151, Cys56–Cys72, Cys71–Cys132, Cys78–Cys125, Cys88–Cys118, and Cys111–Cys123. Asn97 is a glycosylation site (N-linked (GlcNAc...) asparagine).

It belongs to the phospholipase A2 family. Group I subfamily. D49 sub-subfamily. Heterotrimer of alpha, beta, and gamma chains; non-covalently linked. Contains 0.9% fucose, 2.2% mannose, 4.2% N-acetyl-D-glucosamine, 3.5% galactose, and 3.8% N-acetyl-neuraminic acid (sialic acid). In terms of tissue distribution, expressed by the venom gland.

It localises to the secreted. Heterotrimer: Snake venom phospholipase A2 (PLA2) heterotrimer that acts as a potent presynaptic neurotoxin by blocking synaptic transmission and synaptic vesicle recycling. May act by binding in a calcium-dependent fashion to neurotonal pentraxin-1 (NPTX1) and neurotonal pentraxin-2 (NPTX2), but not to neuronal pentraxin receptor (NPTXR). Also binds to taipoxin-associated calcium binding protein 49 (RCN2), a protein localized in the lumen of endoplasmic reticulum. In terms of biological role, monomer (gamma chain): Snake venom phospholipase A2 homolog that is neither toxic nor enzymatically active. Does not bind calcium. This Oxyuranus scutellatus scutellatus (Australian taipan) protein is Acidic phospholipase A2 homolog taipoxin gamma chain.